We begin with the raw amino-acid sequence, 231 residues long: MTESSIHDPLTIRRLYGRQQGHSLRPKQAELVETLLPQLEITTEQAVSATDLFGDDRPLEFEIGFGKGEHLAGQAMMRPDHGFIGCEPFLDGVVGLLTHIDNNQIKNIRLHRGDALDILEQLPDGCLDRAYLLHPDPWPKARHAKRRFMNHGPIGLIARKMKKGGEFRFGTDHPIYCHWAMMIMGQRPDFEWLAQTPRDFLQRPEDWPQTRYEKKAREKGHEVWYFRYRRV.

S-adenosyl-L-methionine is bound by residues glutamate 62, glutamate 87, aspartate 114, and aspartate 136. The active site involves aspartate 136. Substrate contacts are provided by residues lysine 140, aspartate 172, and 210 to 213 (TRYE).

Belongs to the class I-like SAM-binding methyltransferase superfamily. TrmB family.

The enzyme catalyses guanosine(46) in tRNA + S-adenosyl-L-methionine = N(7)-methylguanosine(46) in tRNA + S-adenosyl-L-homocysteine. It participates in tRNA modification; N(7)-methylguanine-tRNA biosynthesis. Functionally, catalyzes the formation of N(7)-methylguanine at position 46 (m7G46) in tRNA. The chain is tRNA (guanine-N(7)-)-methyltransferase from Zymomonas mobilis subsp. mobilis (strain ATCC 31821 / ZM4 / CP4).